The following is a 439-amino-acid chain: C4-dicarboxylate transport protein (439 aa).

9 helical membrane passes run 9–29, 45–65, 77–97, 145–165, 185–205, 223–243, 290–310, 332–352, and 353–373; these read SLYA…HFLP, LIKM…IAGM, LALL…LIIV, AFAK…GFAL, VLFT…FGAM, LMGA…GIVT, VVGL…AIYL, TLLA…GSGF, and IVLA…LALI. The disordered stretch occupies residues 417–439; it reads NESPQAADQPEKILDQTNTKLGA.

Belongs to the dicarboxylate/amino acid:cation symporter (DAACS) (TC 2.A.23) family.

The protein localises to the cell inner membrane. In terms of biological role, responsible for the transport of dicarboxylates such as succinate, fumarate, and malate from the periplasm across the membrane. The protein is C4-dicarboxylate transport protein of Janthinobacterium sp. (strain Marseille) (Minibacterium massiliensis).